We begin with the raw amino-acid sequence, 546 residues long: Chaperonin GroEL (546 aa).

Residues 29–32, Lys-50, 86–90, Gly-414, 477–479, and Asp-493 each bind ATP; these read TLGP, DGTTT, and NAL.

It belongs to the chaperonin (HSP60) family. In terms of assembly, forms a cylinder of 14 subunits composed of two heptameric rings stacked back-to-back. Interacts with the co-chaperonin GroES.

It localises to the cytoplasm. It catalyses the reaction ATP + H2O + a folded polypeptide = ADP + phosphate + an unfolded polypeptide.. Functionally, together with its co-chaperonin GroES, plays an essential role in assisting protein folding. The GroEL-GroES system forms a nano-cage that allows encapsulation of the non-native substrate proteins and provides a physical environment optimized to promote and accelerate protein folding. In Leptospira interrogans serogroup Icterohaemorrhagiae serovar copenhageni (strain Fiocruz L1-130), this protein is Chaperonin GroEL.